We begin with the raw amino-acid sequence, 564 residues long: Zyxin (564 aa).

N-acetylalanine is present on alanine 2. The disordered stretch occupies residues 30–141; it reads VAPKPKVNPF…TQLPPQPREK (112 aa). Composition is skewed to pro residues over residues 63–78 and 93–109; these read IPPP…PPPL and FPPP…PPAP. 4 positions are modified to phosphoserine: serine 117, serine 144, serine 170, and serine 171. Positions 162–344 are disordered; the sequence is NDPFKARVSS…RSPGGPGPLT (183 aa). 2 stretches are compositionally biased toward pro residues: residues 174–189 and 197–214; these read VPPP…PSTK and PLPP…PQPQ. Threonine 180 carries the phosphothreonine modification. Polar residues predominate over residues 234–243; that stretch reads QPVSSANTQP. Arginine 244 carries the post-translational modification Asymmetric dimethylarginine. Residues 255–275 show a composition bias toward low complexity; sequence PKFAPVAPKFTPVVSKFSPGA. An N6-acetyllysine mark is found at lysine 256 and lysine 263. Threonine 265 is modified (phosphothreonine). Lysine 270 carries the post-translational modification N6-acetyllysine. Residues serine 272 and serine 300 each carry the phosphoserine modification. Polar residues predominate over residues 294-310; sequence SSVSTGSPQPPSFTYAQ. A compositionally biased stretch (basic and acidic residues) spans 311-322; it reads QKEKPLVQEKQH. Residue serine 336 is modified to Phosphoserine. 3 consecutive LIM zinc-binding domains span residues 376-435, 436-495, and 496-562; these read CGKC…TLEK, CNTC…YAPR, and CSVC…SARA.

This sequence belongs to the zyxin/ajuba family. Interacts, via the Pro-rich regions, with the EVH1 domains of ENAH, EVL and VASP. Interacts with the first LIM domain of TES. Interacts with SYNPO2.

The protein resides in the cytoplasm. The protein localises to the cytoskeleton. It localises to the cell junction. It is found in the focal adhesion. Its subcellular location is the nucleus. In terms of biological role, adhesion plaque protein. Binds alpha-actinin and the CRP protein. Important for targeting TES and ENA/VASP family members to focal adhesions and for the formation of actin-rich structures. May be a component of a signal transduction pathway that mediates adhesion-stimulated changes in gene expression. This Mus musculus (Mouse) protein is Zyxin (Zyx).